A 439-amino-acid polypeptide reads, in one-letter code: Leukocyte immunoglobulin-like receptor subfamily A member 3 (439 aa).

Residues 1–23 form the signal peptide; that stretch reads MTPILTVLICLGLSLDPRTHVQA. Ig-like C2-type domains are found at residues 27-108, 119-224, 226-315, and 326-415; these read PKPT…AGLS, TGAY…GVSK, PSLS…DPLD, and PFLS…SDPL. Cys-49 and Cys-98 are joined by a disulfide. N-linked (GlcNAc...) asparagine glycosylation is present at Asn-140. Intrachain disulfides connect Cys-145–Cys-197, Cys-157–Cys-167, and Cys-246–Cys-297. N-linked (GlcNAc...) asparagine glycans are attached at residues Asn-281, Asn-302, and Asn-341. A disulfide bridge connects residues Cys-346 and Cys-397. Asn-431 carries N-linked (GlcNAc...) asparagine glycosylation.

N-glycosylation is required for ligand binding. Detected in B-cells, and at lower levels in natural killer (NK) cells. Detected in peripheral blood monocytes and lung.

The protein localises to the secreted. Acts as a soluble receptor for class I MHC antigens. Binds both classical and non-classical HLA class I molecules but with reduced affinities compared to LILRB1 or LILRB2. Binds with high affinity to the surface of monocytes, leading to abolish LPS-induced TNF-alpha production by monocytes. This chain is Leukocyte immunoglobulin-like receptor subfamily A member 3 (LILRA3), found in Homo sapiens (Human).